The following is a 449-amino-acid chain: Exodeoxyribonuclease 7 large subunit (449 aa).

This sequence belongs to the XseA family. In terms of assembly, heterooligomer composed of large and small subunits.

It localises to the cytoplasm. It catalyses the reaction Exonucleolytic cleavage in either 5'- to 3'- or 3'- to 5'-direction to yield nucleoside 5'-phosphates.. Its function is as follows. Bidirectionally degrades single-stranded DNA into large acid-insoluble oligonucleotides, which are then degraded further into small acid-soluble oligonucleotides. The polypeptide is Exodeoxyribonuclease 7 large subunit (Salmonella typhimurium (strain LT2 / SGSC1412 / ATCC 700720)).